The chain runs to 779 residues: LPS-assembly protein LptD (779 aa).

A signal peptide spans 1 to 23; it reads MKIRYSVLSTFIISALYSQDTQA.

Belongs to the LptD family. As to quaternary structure, component of the lipopolysaccharide transport and assembly complex. Interacts with LptE and LptA.

The protein localises to the cell outer membrane. Together with LptE, is involved in the assembly of lipopolysaccharide (LPS) at the surface of the outer membrane. The sequence is that of LPS-assembly protein LptD from Haemophilus ducreyi (strain 35000HP / ATCC 700724).